The sequence spans 61 residues: Hepcidin (61 aa).

The interval 1–24 (LQVLTEEVGSIDSPVGEHQQPGGE) is disordered. Positions 1-34 (LQVLTEEVGSIDSPVGEHQQPGGESMRLPEHFRF) are excised as a propeptide. 4 disulfides stabilise this stretch: Cys-43–Cys-59, Cys-46–Cys-49, Cys-47–Xaa-55, and Cys-50–Cys-58.

It belongs to the hepcidin family.

The protein localises to the secreted. Functionally, seems to act as a signaling molecule involved in the maintenance of iron homeostasis. Seems to be required in conjunction with HFE to regulate both intestinal iron absorption and iron storage in macrophages. May also have antimicrobial activity. This chain is Hepcidin (hamp), found in Oncorhynchus mykiss (Rainbow trout).